We begin with the raw amino-acid sequence, 206 residues long: Small ribosomal subunit protein uS4 (206 aa).

The S4 RNA-binding domain maps to 96 to 158; it reads GRLDNVVYRM…AKQQTRIKAA (63 aa).

The protein belongs to the universal ribosomal protein uS4 family. In terms of assembly, part of the 30S ribosomal subunit. Contacts protein S5. The interaction surface between S4 and S5 is involved in control of translational fidelity.

In terms of biological role, one of the primary rRNA binding proteins, it binds directly to 16S rRNA where it nucleates assembly of the body of the 30S subunit. With S5 and S12 plays an important role in translational accuracy. The chain is Small ribosomal subunit protein uS4 from Vibrio vulnificus (strain CMCP6).